The following is a 703-amino-acid chain: Phosphate acetyltransferase (703 aa).

A phosphate acetyltransferase region spans residues 377–703 (AFRYELIQKA…IQATQAREGA (327 aa)).

It in the N-terminal section; belongs to the CobB/CobQ family. This sequence in the C-terminal section; belongs to the phosphate acetyltransferase and butyryltransferase family.

Its subcellular location is the cytoplasm. The catalysed reaction is acetyl-CoA + phosphate = acetyl phosphate + CoA. It functions in the pathway metabolic intermediate biosynthesis; acetyl-CoA biosynthesis; acetyl-CoA from acetate: step 2/2. In terms of biological role, involved in acetate metabolism. The sequence is that of Phosphate acetyltransferase (pta) from Deinococcus geothermalis (strain DSM 11300 / CIP 105573 / AG-3a).